We begin with the raw amino-acid sequence, 343 residues long: Pseudaminic acid synthase (343 aa).

The 57-residue stretch at 287 to 343 folds into the AFP-like domain; the sequence is SLYASKDIKKGEMFSEENVKSVRPSFGLHPKFYQELLGKKASKDIKFGDALKQGDFQ.

This sequence belongs to the pseudaminic acid synthase family. The cofactor is a divalent metal cation.

It carries out the reaction 2,4-diacetamido-2,4,6-trideoxy-beta-L-altrose + phosphoenolpyruvate + H2O = pseudaminate + phosphate. Catalyzes the fifth step in the biosynthesis of pseudaminic acid, a sialic-acid-like sugar that is used to modify flagellin. Catalyzes the condensation of phosphoenolpyruvate with 2,4-diacetamido-2,4,6-trideoxy-beta-l-altropyranose, forming pseudaminic acid. In Campylobacter jejuni subsp. jejuni serotype O:2 (strain ATCC 700819 / NCTC 11168), this protein is Pseudaminic acid synthase (pseI).